A 476-amino-acid chain; its full sequence is Bifunctional protein HldE (476 aa).

Residues 1–319 (MKVSLPAFEK…EALALHHGES (319 aa)) form a ribokinase region. Position 195–198 (195–198 (NMSE)) interacts with ATP. Residue Asp264 is part of the active site. The cytidylyltransferase stretch occupies residues 345-476 (MTNGCFDILH…AIIQNIMAKQ (132 aa)).

The protein in the N-terminal section; belongs to the carbohydrate kinase PfkB family. In the C-terminal section; belongs to the cytidylyltransferase family. In terms of assembly, homodimer.

The catalysed reaction is D-glycero-beta-D-manno-heptose 7-phosphate + ATP = D-glycero-beta-D-manno-heptose 1,7-bisphosphate + ADP + H(+). The enzyme catalyses D-glycero-beta-D-manno-heptose 1-phosphate + ATP + H(+) = ADP-D-glycero-beta-D-manno-heptose + diphosphate. It functions in the pathway nucleotide-sugar biosynthesis; ADP-L-glycero-beta-D-manno-heptose biosynthesis; ADP-L-glycero-beta-D-manno-heptose from D-glycero-beta-D-manno-heptose 7-phosphate: step 1/4. Its pathway is nucleotide-sugar biosynthesis; ADP-L-glycero-beta-D-manno-heptose biosynthesis; ADP-L-glycero-beta-D-manno-heptose from D-glycero-beta-D-manno-heptose 7-phosphate: step 3/4. Catalyzes the phosphorylation of D-glycero-D-manno-heptose 7-phosphate at the C-1 position to selectively form D-glycero-beta-D-manno-heptose-1,7-bisphosphate. Functionally, catalyzes the ADP transfer from ATP to D-glycero-beta-D-manno-heptose 1-phosphate, yielding ADP-D-glycero-beta-D-manno-heptose. In Shewanella sp. (strain MR-4), this protein is Bifunctional protein HldE.